Here is a 603-residue protein sequence, read N- to C-terminus: MAKHIVELTDALSNKIAAGEVVERPASVVKELVENAIDAGSTVIDILVEEAGLNKITIIDNGSGIEEEDVATAFLRHATSKIKNEADLFRVHTLGFRGEALPSIASVSHLEMETSTGEAKGTTISLEGGKIIEQKSGHARKGTQIEVSQLFFNTPARLKYLKSLPTELGNITDILNRLALAHPDISFRFSHNGKPLLQTNGNGELRQVIAAIYGVSIAKKSVPVKAESLDFKISGYAVLPEVNRSNRNYISTIINGRFIKNFALVKAIQEGYHTLLPIGRFPIIVLQIEMDPIIVDVNVHPAKLEVRLSKEKELGQLISQMIKETFHKLQLIPDGEISKKQKEDQKSEQIQMSFEENKPVKETPTLFSKPTIPEYVPSDEDAPREDDFILETMPSYEPESQAEQEEHTKERIPKMYPIGQMHATYIFAQNENGLYIIDQHAAQERIKYEFYREKIGEVSRELQELLVPIVLEFPADEYVRLEEQKAKLEEVGVFLENFGQNSFIIRAHPTWFPKDQEEEMLREIIDEALSAPSISIHKLREDTAIMMSCKKSIKANHYLTTQDMEALLDTLREASDPFTCPHGRPVIIQYSTYELEKMFKRVM.

Residues 337-347 (ISKKQKEDQKS) show a composition bias toward basic and acidic residues. Residues 337 to 383 (ISKKQKEDQKSEQIQMSFEENKPVKETPTLFSKPTIPEYVPSDEDAP) form a disordered region.

This sequence belongs to the DNA mismatch repair MutL/HexB family.

Functionally, this protein is involved in the repair of mismatches in DNA. It is required for dam-dependent methyl-directed DNA mismatch repair. May act as a 'molecular matchmaker', a protein that promotes the formation of a stable complex between two or more DNA-binding proteins in an ATP-dependent manner without itself being part of a final effector complex. In Listeria monocytogenes serotype 4b (strain F2365), this protein is DNA mismatch repair protein MutL.